Reading from the N-terminus, the 590-residue chain is Aspartate--tRNA(Asp/Asn) ligase (590 aa).

Residue Glu170 participates in L-aspartate binding. An aspartate region spans residues Gln194–Lys197. L-aspartate is bound at residue Arg216. ATP contacts are provided by residues Arg216 to Glu218 and Gln225. His448 contacts L-aspartate. Glu482 contacts ATP. Residue Arg489 coordinates L-aspartate. Residue Gly534–Arg537 participates in ATP binding. Residues Gly559 to Ala590 are disordered. The span at Gln575–Ala590 shows a compositional bias: basic and acidic residues.

This sequence belongs to the class-II aminoacyl-tRNA synthetase family. Type 1 subfamily. Homodimer.

Its subcellular location is the cytoplasm. The enzyme catalyses tRNA(Asx) + L-aspartate + ATP = L-aspartyl-tRNA(Asx) + AMP + diphosphate. Its function is as follows. Aspartyl-tRNA synthetase with relaxed tRNA specificity since it is able to aspartylate not only its cognate tRNA(Asp) but also tRNA(Asn). Reaction proceeds in two steps: L-aspartate is first activated by ATP to form Asp-AMP and then transferred to the acceptor end of tRNA(Asp/Asn). The polypeptide is Aspartate--tRNA(Asp/Asn) ligase (Mycolicibacterium gilvum (strain PYR-GCK) (Mycobacterium gilvum (strain PYR-GCK))).